A 957-amino-acid polypeptide reads, in one-letter code: Glycine dehydrogenase (decarboxylating) (957 aa).

The residue at position 708 (Lys-708) is an N6-(pyridoxal phosphate)lysine.

It belongs to the GcvP family. In terms of assembly, the glycine cleavage system is composed of four proteins: P, T, L and H. It depends on pyridoxal 5'-phosphate as a cofactor.

It catalyses the reaction N(6)-[(R)-lipoyl]-L-lysyl-[glycine-cleavage complex H protein] + glycine + H(+) = N(6)-[(R)-S(8)-aminomethyldihydrolipoyl]-L-lysyl-[glycine-cleavage complex H protein] + CO2. In terms of biological role, the glycine cleavage system catalyzes the degradation of glycine. The P protein binds the alpha-amino group of glycine through its pyridoxal phosphate cofactor; CO(2) is released and the remaining methylamine moiety is then transferred to the lipoamide cofactor of the H protein. The protein is Glycine dehydrogenase (decarboxylating) of Salmonella dublin (strain CT_02021853).